A 202-amino-acid chain; its full sequence is Hypoxanthine-guanine phosphoribosyltransferase (202 aa).

Residues K66 and G67 each contribute to the diphosphate site. Positions 122 and 123 each coordinate Mg(2+). The Proton acceptor role is filled by D126. Residues K154, 175-176 (FV), and D182 each bind GMP. R188 is a binding site for diphosphate.

The protein belongs to the purine/pyrimidine phosphoribosyltransferase family. As to quaternary structure, homodimer and homotetramer in equilibrium. The presence or absence of divalent metal ions, as well as phosphate, can affect the oligomerization state of the enzyme. Likely functions as a tetramer (rather than a dimer) in its biological environment, which is the most active form. The dimeric structure is also active though ~50% of that of the tetramer. Mg(2+) serves as cofactor.

The protein resides in the cytoplasm. It catalyses the reaction IMP + diphosphate = hypoxanthine + 5-phospho-alpha-D-ribose 1-diphosphate. It carries out the reaction GMP + diphosphate = guanine + 5-phospho-alpha-D-ribose 1-diphosphate. Its pathway is purine metabolism; IMP biosynthesis via salvage pathway; IMP from hypoxanthine: step 1/1. It participates in purine metabolism; GMP biosynthesis via salvage pathway; GMP from guanine: step 1/1. With respect to regulation, competitively inhibited by acyclic nucleoside phosphonates (ANPs) with Ki values as low as 0.69 uM. Prodrugs of these compounds arrest the growth of a virulent strain of M.tuberculosis with MIC50 values as low as 4.5 uM and possess low cytotoxicity in mammalian cells. Inhibited by pyrrolidine nucleoside bisphosphonates, which are also able to arrest the growth of virulent M.tuberculosis not only in its replicating phase but also in its latent phase, and to arrest the growth of M.tuberculosis in infected macrophages while having low cytotoxicity in mammalian cells. In terms of biological role, purine salvage pathway enzyme that catalyzes the transfer of the ribosyl-5-phosphate group from 5-phospho-alpha-D-ribose 1-diphosphate (PRPP) to the N9 position of the 6-oxopurines hypoxanthine and guanine to form the corresponding ribonucleotides IMP (inosine 5'-monophosphate) and GMP (guanosine 5'-monophosphate), with the release of PPi. Thus, specifically recycles hypoxanthine and guanine imported from the external medium, and converts them to IMP and GMP, respectively. Cannot use xanthine as substrate. This chain is Hypoxanthine-guanine phosphoribosyltransferase, found in Mycobacterium tuberculosis (strain ATCC 25618 / H37Rv).